Consider the following 395-residue polypeptide: Phosphopentomutase (395 aa).

Mn(2+) is bound by residues Asp-14, Asp-286, His-291, Asp-327, His-328, and His-339.

Belongs to the phosphopentomutase family. Requires Mn(2+) as cofactor.

Its subcellular location is the cytoplasm. It catalyses the reaction 2-deoxy-alpha-D-ribose 1-phosphate = 2-deoxy-D-ribose 5-phosphate. The catalysed reaction is alpha-D-ribose 1-phosphate = D-ribose 5-phosphate. The protein operates within carbohydrate degradation; 2-deoxy-D-ribose 1-phosphate degradation; D-glyceraldehyde 3-phosphate and acetaldehyde from 2-deoxy-alpha-D-ribose 1-phosphate: step 1/2. In terms of biological role, isomerase that catalyzes the conversion of deoxy-ribose 1-phosphate (dRib-1-P) and ribose 1-phosphate (Rib-1-P) to deoxy-ribose 5-phosphate (dRib-5-P) and ribose 5-phosphate (Rib-5-P), respectively. The chain is Phosphopentomutase from Staphylococcus saprophyticus subsp. saprophyticus (strain ATCC 15305 / DSM 20229 / NCIMB 8711 / NCTC 7292 / S-41).